Reading from the N-terminus, the 474-residue chain is ATP synthase subunit beta (474 aa).

152–159 contacts ATP; that stretch reads GGAGVGKT.

This sequence belongs to the ATPase alpha/beta chains family. F-type ATPases have 2 components, CF(1) - the catalytic core - and CF(0) - the membrane proton channel. CF(1) has five subunits: alpha(3), beta(3), gamma(1), delta(1), epsilon(1). CF(0) has four main subunits: a(1), b(1), b'(1) and c(9-12).

It is found in the cell inner membrane. The catalysed reaction is ATP + H2O + 4 H(+)(in) = ADP + phosphate + 5 H(+)(out). Produces ATP from ADP in the presence of a proton gradient across the membrane. The catalytic sites are hosted primarily by the beta subunits. This is ATP synthase subunit beta from Rhodospirillum rubrum (strain ATCC 11170 / ATH 1.1.1 / DSM 467 / LMG 4362 / NCIMB 8255 / S1).